We begin with the raw amino-acid sequence, 200 residues long: 6-carboxy-5,6,7,8-tetrahydropterin synthase (200 aa).

Residue His13 participates in Zn(2+) binding. Cys23 acts as the Proton acceptor in catalysis. Positions 28 and 30 each coordinate Zn(2+). Residues His68 and Glu136 each act as charge relay system in the active site.

It belongs to the PTPS family. QueD subfamily. The cofactor is Zn(2+).

The catalysed reaction is 7,8-dihydroneopterin 3'-triphosphate + H2O = 6-carboxy-5,6,7,8-tetrahydropterin + triphosphate + acetaldehyde + 2 H(+). It functions in the pathway purine metabolism; 7-cyano-7-deazaguanine biosynthesis. Catalyzes the conversion of 7,8-dihydroneopterin triphosphate (H2NTP) to 6-carboxy-5,6,7,8-tetrahydropterin (CPH4) and acetaldehyde. The chain is 6-carboxy-5,6,7,8-tetrahydropterin synthase (queD) from Helicobacter pylori (strain J99 / ATCC 700824) (Campylobacter pylori J99).